The chain runs to 246 residues: 1-(5-phosphoribosyl)-5-[(5-phosphoribosylamino)methylideneamino] imidazole-4-carboxamide isomerase (246 aa).

Asp7 serves as the catalytic Proton acceptor. Residue Asp129 is the Proton donor of the active site.

It belongs to the HisA/HisF family.

Its subcellular location is the cytoplasm. It catalyses the reaction 1-(5-phospho-beta-D-ribosyl)-5-[(5-phospho-beta-D-ribosylamino)methylideneamino]imidazole-4-carboxamide = 5-[(5-phospho-1-deoxy-D-ribulos-1-ylimino)methylamino]-1-(5-phospho-beta-D-ribosyl)imidazole-4-carboxamide. Its pathway is amino-acid biosynthesis; L-histidine biosynthesis; L-histidine from 5-phospho-alpha-D-ribose 1-diphosphate: step 4/9. The protein is 1-(5-phosphoribosyl)-5-[(5-phosphoribosylamino)methylideneamino] imidazole-4-carboxamide isomerase of Shewanella sediminis (strain HAW-EB3).